The primary structure comprises 419 residues: Homeobox-containing protein 1 (419 aa).

An HNF-p1 domain is found at 18–49; that stretch reads DEPRFTIEQIDLLQRLRRTGMTKHEILHALET. The segment at 56–152 is disordered; sequence EHSDKFGRRS…GQRSYSFEAS (97 aa). A Glycyl lysine isopeptide (Lys-Gly) (interchain with G-Cter in SUMO2) cross-link involves residue K60. 2 stretches are compositionally biased toward low complexity: residues 64 to 73 and 81 to 93; these read RSSYGGSSYG and ASSS…TQTQ. Residues 94-132 are compositionally biased toward polar residues; the sequence is HSGMSPSPSNSYDTSPLPCTTNQNGRENNDRLSTSNGKM. K131 participates in a covalent cross-link: Glycyl lysine isopeptide (Lys-Gly) (interchain with G-Cter in SUMO2). Residues 145–241 enclose the POU-specific atypical domain; the sequence is RSYSFEASEE…PGATLSMRPA (97 aa). At S148 the chain carries Phosphoserine. Residue K161 forms a Glycyl lysine isopeptide (Lys-Gly) (interchain with G-Cter in SUMO2) linkage. The residue at position 170 (S170) is a Phosphoserine. Residues K174, K217, and K310 each participate in a glycyl lysine isopeptide (Lys-Gly) (interchain with G-Cter in SUMO2) cross-link. A DNA-binding region (homeobox) is located at residues 267 to 341; sequence RRGSRFTWRK…NRRKEIKRRA (75 aa). Positions 352–384 are disordered; the sequence is IDVQSPGGHSNSDDVDGNDYSEQDDSTSHSDHQ. The span at 364–376 shows a compositional bias: acidic residues; sequence DDVDGNDYSEQDD. A Glycyl lysine isopeptide (Lys-Gly) (interchain with G-Cter in SUMO1); alternate cross-link involves residue K412. K412 participates in a covalent cross-link: Glycyl lysine isopeptide (Lys-Gly) (interchain with G-Cter in SUMO2); alternate.

In terms of assembly, associates with the telomerase holoenzyme complex. Interacts with DKC1, XRCC6 and COIL.

It is found in the nucleus. The protein localises to the cytoplasm. It localises to the chromosome. The protein resides in the telomere. Its subcellular location is the cajal body. It is found in the PML body. Functionally, binds directly to 5'-TTAGGG-3' repeats in telomeric DNA. Associates with the telomerase complex at sites of active telomere processing and positively regulates telomere elongation. Important for TERT binding to chromatin, indicating a role in recruitment of the telomerase complex to telomeres. Also plays a role in the alternative lengthening of telomeres (ALT) pathway in telomerase-negative cells where it promotes formation and/or maintenance of ALT-associated promyelocytic leukemia bodies (APBs). Enhances formation of telomere C-circles in ALT cells, suggesting a possible role in telomere recombination. Might also be involved in the DNA damage response at telomeres. This is Homeobox-containing protein 1 (Hmbox1) from Mus musculus (Mouse).